The sequence spans 447 residues: Teichoic acids export ATP-binding protein TagH (447 aa).

Positions D24–H246 constitute an ABC transporter domain. Residue G60–S67 coordinates ATP. The unknown stretch occupies residues F247–E447. Residues N359 to S393 form a disordered region. Composition is skewed to polar residues over residues A360–A369 and E379–S393. Residues S398–L442 form the LysM domain.

Belongs to the ABC transporter superfamily. Teichoic acids exporter (TC 3.A.1.104.1) family. The complex is composed of two ATP-binding proteins (TagH) and two transmembrane proteins (TagG).

It is found in the cell membrane. The catalysed reaction is ATP + H2O + teichoic acidSide 1 = ADP + phosphate + teichoic acidSide 2.. In terms of biological role, part of the ABC transporter complex TagGH involved in teichoic acids export. Responsible for energy coupling to the transport system. The sequence is that of Teichoic acids export ATP-binding protein TagH from Enterococcus faecalis (strain ATCC 700802 / V583).